A 90-amino-acid chain; its full sequence is MGRTVNCIKLGRELEGLDFPPYPGELGKRIFENVSKEAWAGWIRHQTMLVNEYHLNLSDIKARKYLAEQLDAYFFGSGAEQPRGYVPLAK.

Belongs to the Fe(2+)-trafficking protein family.

Its function is as follows. Could be a mediator in iron transactions between iron acquisition and iron-requiring processes, such as synthesis and/or repair of Fe-S clusters in biosynthetic enzymes. The sequence is that of Probable Fe(2+)-trafficking protein from Nitrosospira multiformis (strain ATCC 25196 / NCIMB 11849 / C 71).